Consider the following 642-residue polypeptide: MTRLKAKYSPTKGKRKEDKHTKRMRKSSFTRTQKMLEVFNDNRSHFNKYESLAIDVEDDDTFGNLVLMENDKSDVDIPVIEEVTSSEDEQRAESSKRNNSLEDNQDFIAFSDSSEDETEQIKEDDDERSSFLLTDEHEVSKLTSQQSLNTESACNVEYPWIRNHCHSKQRRIADWLTSEIKDFVHYISPSKNEIKCRNRTIDKLRRAVKELWSDADLHVFGSFATDLYLPGSDIDCVVNSRNRDKEDRNYIYELARHLKNKGLAIRMEVIVKTRVPIIKFIEPQSQLHIDVSFERTNGLEAAKLIREWLRDSPGLRELVLIIKQFLHSRRLNNVHTGGLGGFTVICLVYSFLNMHPRIKSNDIDVLDNLGVLLIDFFELYGKNFGYDDVAISISDGYASYIPKSCWRTLEPSRSKFSLAIQDPGDPNNNISRGSFNMKDIKKAFAGAFELLVNKCWELNSATFKDRVGKSILGNVIKYRGQKRDFNDERDLVQNKAIIENERYHKRRTRIVQEDLFINDTEDLPVEEIYKLDEPAKKKQKAKKDKREGEIKKSAIPSPPPDFGVSRSKLKRKVKKTDQGSLLHQNNLSIDDLMGLSENDQESDQDQKGRDTPSGQDEKSPLETKTVDAQTRRDYWLSKGQAL.

Disordered regions lie at residues Met1–Phe29 and Thr84–Asn104. A compositionally biased stretch (basic and acidic residues) spans Asp88–Ser100. Residues Asp233 and Asp235 each contribute to the Mg(2+) site. ATP-binding residues include Gly298, Lys323, Asn428, and Arg432. One can recognise a PAP-associated domain in the interval Asn368 to Asn428. A disordered region spans residues Ala535–Leu642. Polar residues predominate over residues Gln578–Ser588. Phosphoserine occurs at positions 596 and 602. Residues Gln604–Trp635 are compositionally biased toward basic and acidic residues.

It belongs to the DNA polymerase type-B-like family. As to quaternary structure, component of the TRAMP5 complex composed of at least AIR1, MTR4 and TFR5. Interacts with POL2, DPB2 and DPB11. It depends on Mg(2+) as a cofactor. The cofactor is Mn(2+).

Its subcellular location is the nucleus. It localises to the nucleolus. The catalysed reaction is RNA(n) + ATP = RNA(n)-3'-adenine ribonucleotide + diphosphate. Functionally, catalytic subunit of the TRAMP5 complex which has a poly(A) RNA polymerase activity and is involved in a post-transcriptional quality control mechanism limiting inappropriate expression of genetic information. Polyadenylation is required for the degradative activity of the exosome on several of its nuclear RNA substrates like cryptic transcripts generated by RNA polymerase II and III, or hypomethylated pre-tRNAi-Met. Polyadenylates RNA processing and degradation intermediates of snRNAs, snoRNAs and mRNAs that accumulate in strains lacking a functional exosome. TRF5 is also required for proper nuclear division in mitosis and sister chromatid cohesion. Involved in the regulation of histone mRNA levels. May mediate mitotic chromosome condensation. This is Poly(A) RNA polymerase protein 1 (TRF5) from Saccharomyces cerevisiae (strain ATCC 204508 / S288c) (Baker's yeast).